Consider the following 64-residue polypeptide: Large ribosomal subunit protein bL35 (64 aa).

The disordered stretch occupies residues 1 to 21; it reads MPKMKTNRGAAKRFKVKKSGK. Positions 10–21 are enriched in basic residues; that stretch reads AAKRFKVKKSGK.

The protein belongs to the bacterial ribosomal protein bL35 family.

In Nautilia profundicola (strain ATCC BAA-1463 / DSM 18972 / AmH), this protein is Large ribosomal subunit protein bL35.